The following is a 416-amino-acid chain: UDP-N-acetylglucosamine 1-carboxyvinyltransferase (416 aa).

22–23 contacts phosphoenolpyruvate; it reads KN. Residue Arg91 coordinates UDP-N-acetyl-alpha-D-glucosamine. Cys115 functions as the Proton donor in the catalytic mechanism. Cys115 is subject to 2-(S-cysteinyl)pyruvic acid O-phosphothioketal. UDP-N-acetyl-alpha-D-glucosamine-binding positions include 120-124, Asp305, and Ile327; that span reads RPIDL.

Belongs to the EPSP synthase family. MurA subfamily.

The protein resides in the cytoplasm. The enzyme catalyses phosphoenolpyruvate + UDP-N-acetyl-alpha-D-glucosamine = UDP-N-acetyl-3-O-(1-carboxyvinyl)-alpha-D-glucosamine + phosphate. It functions in the pathway cell wall biogenesis; peptidoglycan biosynthesis. Cell wall formation. Adds enolpyruvyl to UDP-N-acetylglucosamine. This chain is UDP-N-acetylglucosamine 1-carboxyvinyltransferase, found in Buchnera aphidicola subsp. Acyrthosiphon pisum (strain 5A).